Consider the following 403-residue polypeptide: S-adenosylmethionine synthase (403 aa).

Residue histidine 17 participates in ATP binding. Aspartate 19 contributes to the Mg(2+) binding site. Glutamate 45 is a binding site for K(+). Residues glutamate 58 and glutamine 101 each contribute to the L-methionine site. Residues 101–111 form a flexible loop region; it reads QSPDIAMGVDR. ATP contacts are provided by residues 177–179, 244–245, aspartate 253, 259–260, alanine 276, and lysine 280; these read DGK, RF, and RK. L-methionine is bound at residue aspartate 253. Lysine 284 contributes to the L-methionine binding site.

This sequence belongs to the AdoMet synthase family. In terms of assembly, homotetramer; dimer of dimers. Mg(2+) is required as a cofactor. It depends on K(+) as a cofactor.

It is found in the cytoplasm. The enzyme catalyses L-methionine + ATP + H2O = S-adenosyl-L-methionine + phosphate + diphosphate. Its pathway is amino-acid biosynthesis; S-adenosyl-L-methionine biosynthesis; S-adenosyl-L-methionine from L-methionine: step 1/1. In terms of biological role, catalyzes the formation of S-adenosylmethionine (AdoMet) from methionine and ATP. The overall synthetic reaction is composed of two sequential steps, AdoMet formation and the subsequent tripolyphosphate hydrolysis which occurs prior to release of AdoMet from the enzyme. The chain is S-adenosylmethionine synthase from Geobacillus kaustophilus (strain HTA426).